The chain runs to 341 residues: Glyceraldehyde-3-phosphate dehydrogenase 3.1 (341 aa).

NAD(+)-binding positions include 13-14 (RI), Asp35, and Arg85. D-glyceraldehyde 3-phosphate-binding positions include 157–159 (SCT), Thr188, 217–218 (TG), and Arg240. Residue Cys158 is the Nucleophile of the active site. Asn322 is a binding site for NAD(+).

The protein belongs to the glyceraldehyde-3-phosphate dehydrogenase family. Homotetramer.

The protein resides in the cytoplasm. It carries out the reaction D-glyceraldehyde 3-phosphate + phosphate + NAD(+) = (2R)-3-phospho-glyceroyl phosphate + NADH + H(+). It participates in carbohydrate degradation; glycolysis; pyruvate from D-glyceraldehyde 3-phosphate: step 1/5. The protein is Glyceraldehyde-3-phosphate dehydrogenase 3.1 of Caenorhabditis briggsae.